The primary structure comprises 681 residues: MWLSACLCLVLSFLGGVNGTCPSQCSCEYHGRHDGSGSRLVLCNDLDMNEVPANFPVDTSKLRIEKTVVRRLPAEAFYYLVELQYLWLAYNSVASIETSSFYNLRQLHELRLDGNSLTAFPWVSLLDMPHLRTLDLHNNRIASVPNEAVRYLRNLTCLDLSSNRLTTLPPDFLDSWSHLAVTPSRSPDFPPRRIILGLQDNPWFCDCHISKVIELSKVTDHAVVLLDPLMVCSEPERFQGILFQRVELEKCLKPSVMMSATKITSALGSNVLLRCDAKGHPTPQLTWTRSDGSTVNYTVIQESPGEGIRWSIISLTSISHKDAGDYRCKAKNLAGISEAVVTVTVVGGVTTTLSPDSSERSPGEPPEQHPQPGLGGSTPPSKSWLSPGLTSAPSYPTPSAALYTSTWSPPPSSLPPIFSAASATTSVQTSISGRTARTSHQPPLLHPGGKSNAKIEKNGRKFPPLSASKKEELALLDQAAPMETNVTIKDLRVARETGVSVTLMWNSSSSTQESSVTVLYSKYGEKDLLLVNADDYGKNQATINGLEPGSQYVACVCPKGVGPREDLCITFSTNRVEGRGSQWSLLLVVTSTACVIVVPLICFLLYKVCKLQCTSDPFWEEDLSKETYIQFETLSPRSQSIGELWTRRHRDDGERLLLCSQSSVDSQMNLKSDGCRTEYYG.

The N-terminal stretch at 1-19 (MWLSACLCLVLSFLGGVNG) is a signal peptide. Asn18 carries N-linked (GlcNAc...) asparagine glycosylation. At 20 to 584 (TCPSQCSCEY…RVEGRGSQWS (565 aa)) the chain is on the lumenal side. LRR repeat units follow at residues 56–79 (PVDTSKLRIEKTVVRRLPAEAFYY), 80–103 (LVELQYLWLAYNSVASIETSSFYN), 104–128 (LRQLHELRLDGNSLTAFPWVSLLDM), 129–151 (PHLRTLDLHNNRIASVPNEAVRY), and 152–175 (LRNLTCLDLSSNRLTTLPPDFLDS). Positions 254–344 (PSVMMSATKI…GISEAVVTVT (91 aa)) constitute an Ig-like domain. Cys275 and Cys328 are disulfide-bonded. N-linked (GlcNAc...) asparagine glycosylation is present at Asn296. 2 disordered regions span residues 350–391 (TTTL…GLTS) and 425–464 (TSVQTSISGRTARTSHQPPLLHPGGKSNAKIEKNGRKFPP). Residues 378–391 (TPPSKSWLSPGLTS) are compositionally biased toward polar residues. N-linked (GlcNAc...) asparagine glycosylation is found at Asn485 and Asn506. The chain crosses the membrane as a helical span at residues 585 to 605 (LLLVVTSTACVIVVPLICFLL). The Cytoplasmic segment spans residues 606 to 681 (YKVCKLQCTS…SDGCRTEYYG (76 aa)).

In terms of tissue distribution, detected in the outer plexiform layer (OPL) of the retina, where it localizes to rod and cone ON-bipolar cells (at protein level). Also detected in bipolar cell bodies in the inner retinal layer (INL) (at protein level).

It is found in the cell projection. The protein resides in the dendrite. It localises to the perikaryon. Its subcellular location is the endoplasmic reticulum membrane. Its function is as follows. Plays a role in the synapse formation and synaptic transmission between cone photoreceptor cells and retinal bipolar cells. Required for normal transmission of a light-evoked stimulus from the cone photoreceptor cells to the ON-bipolar cells and ON-ganglion cells in the inner retina. Required in retinal ON-bipolar cells for normal localization of the cation channel TRPM1 at dendrite tips. Seems to play a specific role in synaptic contacts made by ON-bipolar cells with cone photoreceptor pedicles. May also have a role in cone synapse formation. Might facilitate FGFR1 exit from the endoplasmic reticulum to the Golgi. Could be a regulator of the FGFRs. The chain is Leucine-rich repeat, immunoglobulin-like domain and transmembrane domain-containing protein 3 from Mus musculus (Mouse).